The chain runs to 349 residues: Histidinol-phosphate aminotransferase 1 (349 aa).

Lys-213 bears the N6-(pyridoxal phosphate)lysine mark.

This sequence belongs to the class-II pyridoxal-phosphate-dependent aminotransferase family. Histidinol-phosphate aminotransferase subfamily. Homodimer. Requires pyridoxal 5'-phosphate as cofactor.

It catalyses the reaction L-histidinol phosphate + 2-oxoglutarate = 3-(imidazol-4-yl)-2-oxopropyl phosphate + L-glutamate. Its pathway is amino-acid biosynthesis; L-histidine biosynthesis; L-histidine from 5-phospho-alpha-D-ribose 1-diphosphate: step 7/9. The chain is Histidinol-phosphate aminotransferase 1 from Carboxydothermus hydrogenoformans (strain ATCC BAA-161 / DSM 6008 / Z-2901).